The chain runs to 311 residues: Probable manganese-dependent inorganic pyrophosphatase (311 aa).

Mn(2+) is bound by residues H9, D13, D15, D77, H99, and D151.

It belongs to the PPase class C family. Requires Mn(2+) as cofactor.

The protein resides in the cytoplasm. The enzyme catalyses diphosphate + H2O = 2 phosphate + H(+). In Streptococcus suis (strain 98HAH33), this protein is Probable manganese-dependent inorganic pyrophosphatase.